The following is a 1415-amino-acid chain: DNA-directed RNA polymerase subunit beta' (1415 aa).

The Zn(2+) site is built by cysteine 71, cysteine 73, cysteine 86, and cysteine 89. Positions 461, 463, and 465 each coordinate Mg(2+). Positions 815, 889, 896, and 899 each coordinate Zn(2+).

It belongs to the RNA polymerase beta' chain family. The RNAP catalytic core consists of 2 alpha, 1 beta, 1 beta' and 1 omega subunit. When a sigma factor is associated with the core the holoenzyme is formed, which can initiate transcription. Mg(2+) is required as a cofactor. Zn(2+) serves as cofactor.

The catalysed reaction is RNA(n) + a ribonucleoside 5'-triphosphate = RNA(n+1) + diphosphate. Functionally, DNA-dependent RNA polymerase catalyzes the transcription of DNA into RNA using the four ribonucleoside triphosphates as substrates. In Haemophilus influenzae (strain ATCC 51907 / DSM 11121 / KW20 / Rd), this protein is DNA-directed RNA polymerase subunit beta'.